The following is a 259-amino-acid chain: Protein snail homolog Sna (259 aa).

Residues 1–20 (MPRSFLVKKHFSASKKPNYS) are SNAG domain. A disordered region spans residues 71 to 113 (DYKKSPISPSSSDDSSKPLDLTSFSSEDEGGKTSDPPSPASSA). C2H2-type zinc fingers lie at residues 119–141 (FQCN…KQLH), 150–172 (FSCK…IRSH), 176–198 (CVCK…IRTH), 204–226 (FSCT…LQTH), and 232–255 (YQCK…ETGC).

The protein belongs to the snail C2H2-type zinc-finger protein family. In terms of assembly, interacts (via SNAG domain) with limd1 (via LIM domains), wtip (via LIM domains) and ajuba (via LIM domains). Interacts with elp3; the interaction inhibits snai1 ubiquitination and promotes snai1 stability. Post-translationally, ubiquitinated. In terms of tissue distribution, maternal expression is nearly completely restricted to the vegetal hemisphere. Zygotic expression begins in the dorsal marginal zone just before gastrulation (stage 9), and is almost completely absent in the animal hemisphere. At mid-gastrula (stage 11-11.5), expression begins in the ectoderm in an arc surrounding the prospective neural plate. From stage 12, anterior expression is down-regulated, while levels are increased in the prospective neural crest.

Its subcellular location is the nucleus. Transcriptional repressor. Acts upstream of snai2/slug, zic5 and other neural crest markers in the specification of the neural crest and neural crest migration. Involved in embryonic mesoderm formation. The polypeptide is Protein snail homolog Sna (snai1) (Xenopus laevis (African clawed frog)).